The chain runs to 1050 residues: Collagen alpha-2(I) chain (1050 aa).

A disordered region spans residues 1–1050 (SGGFDFSFLP…FGYEGDFYRA (1050 aa)). A 4-hydroxyproline mark is found at P10 and P13. Over residues 20–32 (RYYGVGLGPGPMG) the composition is skewed to gly residues. Composition is skewed to low complexity over residues 33–46 (LMGP…SGAP) and 56–77 (EPGE…APGK). Residues P40 and P46 each carry the 4-hydroxyproline modification. Over residues 78–92 (AGEDGHPGKPGRPGE) the composition is skewed to basic and acidic residues. Residue K114 is modified to 5-hydroxylysine; alternate. The O-linked (Gal...) hydroxylysine; alternate glycan is linked to K114. Low complexity-rich tracts occupy residues 161-190 (VGAP…SAGP), 236-257 (PGAN…AGAP), 298-311 (EPGS…PGSS), 320-338 (NGES…RGNP), and 355-371 (PAGA…RGPS). Residues P377 and P380 each carry the 4-hydroxyproline modification. Composition is skewed to low complexity over residues 406–425 (LPGI…RGEA) and 452–467 (AGNR…NGAQ). Over residues 474–483 (GVQGGKGEQG) the composition is skewed to gly residues. Composition is skewed to low complexity over residues 530–547 (PGES…SRGP), 598–642 (VGTT…PRGS), and 649–669 (VGPA…QPGA). The span at 670–679 (KGERGTKGPK) shows a compositional bias: basic and acidic residues. Over residues 687-697 (PTGPVGSAGPA) the composition is skewed to low complexity. Residues 707-716 (GSRGDGGPPG) are compositionally biased toward gly residues. Residues 718-727 (TGFPGAAGRT) are compositionally biased toward low complexity. Gly residues predominate over residues 764–773 (GETGAGGPPG). Composition is skewed to low complexity over residues 781–808 (SGEP…LGLP), 816–841 (LPGV…RGPS), 881–903 (YAGN…VGPA), and 911–926 (EPGP…ALGP). A compositionally biased stretch (basic and acidic residues) spans 936-947 (RGDKGEPGDKGP). A compositionally biased stretch (pro residues) spans 1020 to 1032 (SGPPGPPGPPGPP).

This sequence belongs to the fibrillar collagen family. In terms of assembly, trimers of one alpha 2(I) and two alpha 1(I) chains. Interacts (via C-terminus) with TMEM131 (via PapD-L domain); the interaction is direct and is involved in assembly and TRAPPIII ER-to-Golgi transport complex-dependent secretion of collagen. In terms of processing, prolines at the third position of the tripeptide repeating unit (G-X-Y) are hydroxylated in some or all of the chains. Expressed in bones.

The protein resides in the secreted. It is found in the extracellular space. It localises to the extracellular matrix. In terms of biological role, type I collagen is a member of group I collagen (fibrillar forming collagen). This is Collagen alpha-2(I) chain from Megatherium americanum (Giant ground sloth).